Reading from the N-terminus, the 129-residue chain is Phosphoribosyl-AMP cyclohydrolase (129 aa).

Position 84 (Asp-84) interacts with Mg(2+). Cys-85 provides a ligand contact to Zn(2+). Positions 86 and 88 each coordinate Mg(2+). Residues Cys-101 and Cys-108 each coordinate Zn(2+).

The protein belongs to the PRA-CH family. In terms of assembly, homodimer. It depends on Mg(2+) as a cofactor. Zn(2+) serves as cofactor.

It localises to the cytoplasm. The enzyme catalyses 1-(5-phospho-beta-D-ribosyl)-5'-AMP + H2O = 1-(5-phospho-beta-D-ribosyl)-5-[(5-phospho-beta-D-ribosylamino)methylideneamino]imidazole-4-carboxamide. The protein operates within amino-acid biosynthesis; L-histidine biosynthesis; L-histidine from 5-phospho-alpha-D-ribose 1-diphosphate: step 3/9. Functionally, catalyzes the hydrolysis of the adenine ring of phosphoribosyl-AMP. This chain is Phosphoribosyl-AMP cyclohydrolase, found in Halobacterium salinarum (strain ATCC 700922 / JCM 11081 / NRC-1) (Halobacterium halobium).